The following is a 175-amino-acid chain: Adenine phosphoribosyltransferase (175 aa).

This sequence belongs to the purine/pyrimidine phosphoribosyltransferase family. Homodimer.

It is found in the cytoplasm. The enzyme catalyses AMP + diphosphate = 5-phospho-alpha-D-ribose 1-diphosphate + adenine. Its pathway is purine metabolism; AMP biosynthesis via salvage pathway; AMP from adenine: step 1/1. Its function is as follows. Catalyzes a salvage reaction resulting in the formation of AMP, that is energically less costly than de novo synthesis. The chain is Adenine phosphoribosyltransferase from Lactobacillus acidophilus (strain ATCC 700396 / NCK56 / N2 / NCFM).